Reading from the N-terminus, the 396-residue chain is Tryptophan synthase beta chain (396 aa).

An N6-(pyridoxal phosphate)lysine modification is found at lysine 88.

Belongs to the TrpB family. Tetramer of two alpha and two beta chains. It depends on pyridoxal 5'-phosphate as a cofactor.

It catalyses the reaction (1S,2R)-1-C-(indol-3-yl)glycerol 3-phosphate + L-serine = D-glyceraldehyde 3-phosphate + L-tryptophan + H2O. The protein operates within amino-acid biosynthesis; L-tryptophan biosynthesis; L-tryptophan from chorismate: step 5/5. Functionally, the beta subunit is responsible for the synthesis of L-tryptophan from indole and L-serine. This Actinobacillus pleuropneumoniae serotype 3 (strain JL03) protein is Tryptophan synthase beta chain.